Consider the following 287-residue polypeptide: Glutamate racemase (287 aa).

Over residues methionine 1 to alanine 15 the composition is skewed to polar residues. Residues methionine 1–arginine 25 are disordered. Residues aspartate 32–serine 33 and tyrosine 64–glycine 65 each bind substrate. Residue cysteine 96 is the Proton donor/acceptor of the active site. Asparagine 97–threonine 98 is a substrate binding site. Cysteine 208 serves as the catalytic Proton donor/acceptor. Threonine 209–histidine 210 contacts substrate.

It belongs to the aspartate/glutamate racemases family.

It carries out the reaction L-glutamate = D-glutamate. The protein operates within cell wall biogenesis; peptidoglycan biosynthesis. Provides the (R)-glutamate required for cell wall biosynthesis. The polypeptide is Glutamate racemase (Yersinia pseudotuberculosis serotype O:3 (strain YPIII)).